A 304-amino-acid polypeptide reads, in one-letter code: Probable WRKY transcription factor 29 (304 aa).

Disordered regions lie at residues 76-96 (LPEDSKPFRDDKKQRSHGCLL) and 185-236 (YTNE…IPSA). Residues 78 to 88 (EDSKPFRDDKK) are compositionally biased toward basic and acidic residues. The segment at residues 128–194 (KEENLLSDAW…YTNEHNHELP (67 aa)) is a DNA-binding region (WRKY). Polar residues-rich tracts occupy residues 196 to 213 (RRNSLAGSTRAKTSQPKP) and 225 to 236 (SSPTSNPMIPSA).

Belongs to the WRKY group II-e family.

It localises to the nucleus. Its function is as follows. Transcription factor involved in the expression of defense genes in innate immune response of plants. Interacts specifically with the W box (5'-(T)TGAC[CT]-3'), a frequently occurring elicitor-responsive cis-acting element. Activates WRKY 22, SIRK and its own promoters. This chain is Probable WRKY transcription factor 29 (WRKY29), found in Arabidopsis thaliana (Mouse-ear cress).